A 397-amino-acid chain; its full sequence is Phosphoglycerate kinase (397 aa).

Residues 22 to 24, Arg37, 60 to 63, Arg119, and Arg152 contribute to the substrate site; these read DLN and HFGR. ATP is bound by residues Lys202, Glu324, and 354 to 357; that span reads GGDT.

The protein belongs to the phosphoglycerate kinase family. Monomer.

The protein resides in the cytoplasm. The catalysed reaction is (2R)-3-phosphoglycerate + ATP = (2R)-3-phospho-glyceroyl phosphate + ADP. Its pathway is carbohydrate degradation; glycolysis; pyruvate from D-glyceraldehyde 3-phosphate: step 2/5. The polypeptide is Phosphoglycerate kinase (Rhizorhabdus wittichii (strain DSM 6014 / CCUG 31198 / JCM 15750 / NBRC 105917 / EY 4224 / RW1) (Sphingomonas wittichii)).